A 765-amino-acid polypeptide reads, in one-letter code: 5-methyltetrahydropteroyltriglutamate--homocysteine methyltransferase 1 (765 aa).

K18 and N116 together coordinate 5-methyltetrahydropteroyltri-L-glutamate. Residue 437–439 coordinates L-homocysteine; that stretch reads IGS. L-methionine contacts are provided by residues 437–439 and E490; that span reads IGS. Residues 521–522 and W567 contribute to the 5-methyltetrahydropteroyltri-L-glutamate site; that span reads RC. D605 contacts L-homocysteine. L-methionine is bound at residue D605. Residues H647, C649, H658, D662, and E671 each coordinate Zn(2+). H701 serves as the catalytic Proton donor. A Zn(2+)-binding site is contributed by C733.

The protein belongs to the vitamin-B12 independent methionine synthase family. Requires Zn(2+) as cofactor. As to expression, expressed in leaves, stems, flowers, siliques and seeds.

Its subcellular location is the cytoplasm. The protein localises to the cytosol. The catalysed reaction is 5-methyltetrahydropteroyltri-L-glutamate + L-homocysteine = tetrahydropteroyltri-L-glutamate + L-methionine. It functions in the pathway amino-acid biosynthesis; L-methionine biosynthesis via de novo pathway; L-methionine from L-homocysteine (MetE route): step 1/1. In terms of biological role, catalyzes the transfer of a methyl group from 5-methyltetrahydrofolate to homocysteine resulting in methionine formation. This chain is 5-methyltetrahydropteroyltriglutamate--homocysteine methyltransferase 1 (MS1), found in Arabidopsis thaliana (Mouse-ear cress).